The chain runs to 196 residues: Carnitine operon protein CaiE (196 aa).

A disordered region spans residues 173-196 (TQPLRQMEENRPRLQGTTDVTPKR). Residues 187-196 (QGTTDVTPKR) are compositionally biased toward polar residues.

Belongs to the transferase hexapeptide repeat family.

It functions in the pathway amine and polyamine metabolism; carnitine metabolism. Overproduction of CaiE stimulates the activity of CaiB and CaiD. The protein is Carnitine operon protein CaiE of Escherichia coli O6:K15:H31 (strain 536 / UPEC).